The following is a 508-amino-acid chain: Fc receptor-like protein 2 (508 aa).

The N-terminal stretch at 1 to 19 (MLLWSLLVIFDAVTEQADS) is a signal peptide. 4 Ig-like C2-type domains span residues 20–98 (LTLV…SNIV), 109–187 (PVLT…HRIR), 201–290 (PISN…KVVN), and 300–387 (PVLT…VSIS). Over 20-401 (LTLVAPSSVF…YRRDLMTAGV (382 aa)) the chain is Extracellular. Residues cysteine 128 and cysteine 177 are joined by a disulfide bond. N-linked (GlcNAc...) asparagine glycosylation is found at asparagine 204, asparagine 234, asparagine 343, asparagine 355, and asparagine 365. Intrachain disulfides connect cysteine 226-cysteine 275 and cysteine 321-cysteine 368. A helical membrane pass occupies residues 402–422 (LWGLFGVLGFTGVALLLYALF). Residues 423-508 (HKISGESSAT…QVIYSSVKKS (86 aa)) are Cytoplasmic-facing. Positions 429 to 453 (SSATNEPRGASRPNPQEFTYSSPTP) are disordered. A compositionally biased stretch (polar residues) spans 441–452 (PNPQEFTYSSPT). 4 short sequence motifs (ITIM motif) span residues 446–451 (FTYSSP), 460–465 (PVYVNV), 472–477 (VVYSQV), and 500–505 (VIYSSV).

In terms of assembly, the tyrosine-phosphorylated isoform 2 interacts with PTPN6. Isoform 2 is N- and O-glycosylated, and phosphorylated. Expressed in the secondary lymphoid organs, spleen and lymph node. Expression is limited to the mature B-cell lines. Highly expressed in CD19 and within the mantle zones of the tonsil tissue. Isoform 2 is expressed in the spleen, peripheral blood and bone marrow. Isoform 2 and isoform 4 are expressed in B-cell lines. Preferentially expressed in memory B-cells (at protein level).

It localises to the cell membrane. Functionally, may have an regulatory role in normal and neoplastic B cell development. The polypeptide is Fc receptor-like protein 2 (FCRL2) (Homo sapiens (Human)).